Consider the following 434-residue polypeptide: 3-phosphoshikimate 1-carboxyvinyltransferase (434 aa).

3-phosphoshikimate is bound by residues Lys-22, Ser-23, and Arg-27. Lys-22 contacts phosphoenolpyruvate. 2 residues coordinate phosphoenolpyruvate: Gly-93 and Arg-121. 3-phosphoshikimate is bound by residues Ser-168, Ser-169, Gln-170, Ser-199, Asp-320, and Lys-347. Gln-170 contacts phosphoenolpyruvate. Asp-320 (proton acceptor) is an active-site residue. Phosphoenolpyruvate contacts are provided by Arg-351, Arg-394, and Lys-419.

This sequence belongs to the EPSP synthase family. As to quaternary structure, monomer.

The protein resides in the cytoplasm. The enzyme catalyses 3-phosphoshikimate + phosphoenolpyruvate = 5-O-(1-carboxyvinyl)-3-phosphoshikimate + phosphate. The protein operates within metabolic intermediate biosynthesis; chorismate biosynthesis; chorismate from D-erythrose 4-phosphate and phosphoenolpyruvate: step 6/7. Catalyzes the transfer of the enolpyruvyl moiety of phosphoenolpyruvate (PEP) to the 5-hydroxyl of shikimate-3-phosphate (S3P) to produce enolpyruvyl shikimate-3-phosphate and inorganic phosphate. In Burkholderia multivorans (strain ATCC 17616 / 249), this protein is 3-phosphoshikimate 1-carboxyvinyltransferase.